The chain runs to 3843 residues: NBPF family member NBPF19 (3843 aa).

Positions 70–130 (MLRNERQFKE…RSLNEHLQAL (61 aa)) form a coiled coil. 45 consecutive Olduvai domains span residues 165–257 (ENDN…HIIP), 258–329 (ENES…VDIG), 330–421 (RHRW…PSCP), 424–479 (SREL…LDVD), 480–572 (RIKK…RSKK), 573–665 (ERRR…PSCP), 668–723 (SREL…LDVD), 724–816 (RIKK…RSKK), 817–909 (ERRR…PSCP), 912–967 (SREL…LDVD), 968–1060 (RIKK…RSKK), 1061–1153 (ERRR…PSCP), 1156–1211 (SREL…LDVD), 1212–1304 (RIKK…RSKK), 1305–1397 (ERRR…PSCP), 1400–1455 (SREL…LDVD), 1456–1548 (RIKK…RSKK), 1549–1641 (ERRR…PSCP), 1644–1699 (SREL…LDVD), 1700–1792 (RIKK…RSKK), 1793–1885 (ERRR…PSCP), 1888–1943 (SREL…LDVD), 1944–2036 (RIKK…RSKK), 2037–2129 (ERRR…PSCP), 2132–2187 (SREL…LDVD), 2188–2280 (RIKK…RSKK), 2281–2373 (ERRR…PSCP), 2376–2431 (SREL…LDVD), 2432–2524 (RIKK…RSKK), 2525–2617 (ERRR…PSCP), 2620–2675 (SREL…LDVD), 2676–2768 (RIKK…RSKK), 2769–2861 (ERRR…PSCP), 2864–2919 (SREL…LDVD), 2920–3012 (RIKK…RSKK), 3013–3105 (ERRR…PSCP), 3108–3163 (SREL…LDVD), 3164–3256 (RIKK…RSKK), 3257–3349 (ERRR…PSCP), 3352–3407 (SREL…LDVD), 3408–3500 (RIKK…RSKK), 3501–3593 (ERRR…PSCP), 3596–3651 (SREL…LDVD), 3652–3744 (RIKK…RSKK), and 3745–3843 (ERRR…IFPQ). Disordered stretches follow at residues 180–203 (EKVQ…PEDS) and 249–295 (WEDA…EGYS). Composition is skewed to acidic residues over residues 259 to 268 (NESDDEEEEE) and 279 to 291 (ESEE…ESWD). Residues 559–597 (KGKGKKRRGRRSKKERRRGRKEGEEDQNPPCPRLSRELL) form a disordered region. The segment covering 560–578 (GKGKKRRGRRSKKERRRGR) has biased composition (basic residues). Positions 803–841 (KGKGKKRRGRRSKKERRRGRKEGEEDQNPPCPRLSRELL) are disordered. Residues 804–822 (GKGKKRRGRRSKKERRRGR) are compositionally biased toward basic residues. The disordered stretch occupies residues 1047-1085 (KGKGKKRRGRRSKKERRRGRKEGEEDQNPPCPRLSRELL). Over residues 1048 to 1066 (GKGKKRRGRRSKKERRRGR) the composition is skewed to basic residues. A disordered region spans residues 1291–1329 (KGKGKKRRGRRSKKERRRGRKEGEEDQNPPCPRLSRELL). The segment covering 1292-1310 (GKGKKRRGRRSKKERRRGR) has biased composition (basic residues). The segment at 1535 to 1573 (KGKGKKRRGRRSKKERRRGRKEGEEDQNPPCPRLSRELL) is disordered. Residues 1536–1554 (GKGKKRRGRRSKKERRRGR) show a composition bias toward basic residues. The tract at residues 1779-1817 (KGKGKKRRGRRSKKERRRGRKEGEEDQNPPCPRLSRELL) is disordered. Positions 1780 to 1798 (GKGKKRRGRRSKKERRRGR) are enriched in basic residues. A disordered region spans residues 2023–2061 (KGKGKKRRGRRSKKERRRGRKEGEEDQNPPCPRLSRELL). Residues 2024–2042 (GKGKKRRGRRSKKERRRGR) are compositionally biased toward basic residues. Residues 2267 to 2305 (KGKGKKRRGRRSKKERRRGRKEGEEDQNPPCPRLSRELL) form a disordered region. The span at 2268 to 2286 (GKGKKRRGRRSKKERRRGR) shows a compositional bias: basic residues. A disordered region spans residues 2511-2549 (KGKGKKRRGRRSKKERRRGRKEGEEDQNPPCPRLSRELL). A compositionally biased stretch (basic residues) spans 2512-2530 (GKGKKRRGRRSKKERRRGR). The tract at residues 2755–2793 (KGKGKKRRGRRSKKERRRGRKEGEEDQNPPCPRLSRELL) is disordered. A compositionally biased stretch (basic residues) spans 2756–2774 (GKGKKRRGRRSKKERRRGR). The interval 2999–3037 (KGKGKKRRGRRSKKERRRGRKEGEEDQNPPCPRLSRELL) is disordered. Residues 3000–3018 (GKGKKRRGRRSKKERRRGR) show a composition bias toward basic residues. The segment at 3243–3281 (KGKGKKRRGRRSKKERRRGRKEGEEDQNPPCPRLSRELL) is disordered. Residues 3244 to 3262 (GKGKKRRGRRSKKERRRGR) are compositionally biased toward basic residues. Residues 3487 to 3525 (KGKGKKRRGRRSKKERRRGRKEGEEDQNPPCPRLSRELL) form a disordered region. Over residues 3488-3506 (GKGKKRRGRRSKKERRRGR) the composition is skewed to basic residues. Residues 3731–3764 (KGKGKKRRGRRSKKERRRGRKEGEEDQNPPCPRL) form a disordered region. The span at 3732-3750 (GKGKKRRGRRSKKERRRGR) shows a compositional bias: basic residues.

This sequence belongs to the NBPF family.

It is found in the cytoplasm. The chain is NBPF family member NBPF19 from Homo sapiens (Human).